Here is a 214-residue protein sequence, read N- to C-terminus: 3-isopropylmalate dehydratase small subunit (214 aa).

The protein belongs to the LeuD family. LeuD type 1 subfamily. In terms of assembly, heterodimer of LeuC and LeuD.

The enzyme catalyses (2R,3S)-3-isopropylmalate = (2S)-2-isopropylmalate. Its pathway is amino-acid biosynthesis; L-leucine biosynthesis; L-leucine from 3-methyl-2-oxobutanoate: step 2/4. Its function is as follows. Catalyzes the isomerization between 2-isopropylmalate and 3-isopropylmalate, via the formation of 2-isopropylmaleate. This Pseudomonas fluorescens (strain ATCC BAA-477 / NRRL B-23932 / Pf-5) protein is 3-isopropylmalate dehydratase small subunit.